The sequence spans 189 residues: Movement protein (189 aa).

Belongs to the tombusvirus/aureusvirus movement protein p22 family. As to quaternary structure, interacts with host protein HFI22. Phosphorylated.

It localises to the host membrane. Functionally, transports viral genome to neighboring plant cells directly through plasmosdesmata, without any budding. The movement protein allows efficient cell to cell propagation, by bypassing the host cell wall barrier. This chain is Movement protein, found in Capsicum annuum (Capsicum pepper).